A 698-amino-acid polypeptide reads, in one-letter code: Elongation factor G (698 aa).

The tr-type G domain occupies 6-281 (ENIRNIGICA…AVVDYLPSPI (276 aa)). Residues 15 to 22 (AHIDAGKT), 79 to 83 (DTPGH), and 133 to 136 (NKMD) contribute to the GTP site.

This sequence belongs to the TRAFAC class translation factor GTPase superfamily. Classic translation factor GTPase family. EF-G/EF-2 subfamily.

Its subcellular location is the cytoplasm. In terms of biological role, catalyzes the GTP-dependent ribosomal translocation step during translation elongation. During this step, the ribosome changes from the pre-translocational (PRE) to the post-translocational (POST) state as the newly formed A-site-bound peptidyl-tRNA and P-site-bound deacylated tRNA move to the P and E sites, respectively. Catalyzes the coordinated movement of the two tRNA molecules, the mRNA and conformational changes in the ribosome. This chain is Elongation factor G, found in Rickettsia bellii (strain RML369-C).